Reading from the N-terminus, the 320-residue chain is MARAKIALIGAGMIGGTLAHIAAREELGDVILFDIAEGTPQGKALDIAEASAVFGKDVALKGANDYADIAGADVCIVTAGVPRKPGMSRDDLLGINLKVMKAVGEGIKAHAPNAFVICITNPLDAMVWALQQFSGLPKEKVIGMAGVLDSARFAYFLAEATGVSVEDIHAWTLGGHGDDMVPMVRHSTVGGLPLPELVKQGWLSQDKLDAIVERTRKGGGEIVALLKTGSAFYAPAESAIAMATSYLKDKKRVLPCATYLTGQYGLNDLYVGVPVVIGAGGAEKIVEFETNDDEKAMFAKSVESVKGLMEACKAIDSSLV.

NAD(+)-binding positions include 10-15 (GAGMIG) and aspartate 34. 2 residues coordinate substrate: arginine 83 and arginine 89. Residues asparagine 96 and 119–121 (ITN) each bind NAD(+). Substrate-binding residues include asparagine 121 and arginine 152. The active-site Proton acceptor is histidine 176.

It belongs to the LDH/MDH superfamily. MDH type 3 family.

The enzyme catalyses (S)-malate + NAD(+) = oxaloacetate + NADH + H(+). Functionally, catalyzes the reversible oxidation of malate to oxaloacetate. The chain is Malate dehydrogenase from Caulobacter vibrioides (strain NA1000 / CB15N) (Caulobacter crescentus).